We begin with the raw amino-acid sequence, 137 residues long: Nucleoside diphosphate kinase (137 aa).

The ATP site is built by Lys9, Phe57, Arg85, Thr91, Arg102, and Asn112. The active-site Pros-phosphohistidine intermediate is His115.

The protein belongs to the NDK family. Homotetramer. Mg(2+) serves as cofactor.

The protein resides in the cytoplasm. It catalyses the reaction a 2'-deoxyribonucleoside 5'-diphosphate + ATP = a 2'-deoxyribonucleoside 5'-triphosphate + ADP. The catalysed reaction is a ribonucleoside 5'-diphosphate + ATP = a ribonucleoside 5'-triphosphate + ADP. Functionally, major role in the synthesis of nucleoside triphosphates other than ATP. The ATP gamma phosphate is transferred to the NDP beta phosphate via a ping-pong mechanism, using a phosphorylated active-site intermediate. The polypeptide is Nucleoside diphosphate kinase (Campylobacter jejuni subsp. doylei (strain ATCC BAA-1458 / RM4099 / 269.97)).